We begin with the raw amino-acid sequence, 192 residues long: Ras-like protein RAS2 (192 aa).

Gly-15–Ser-22 serves as a coordination point for GTP. Residues Tyr-37–Tyr-45 carry the Effector region motif. Residues Asp-62–Gln-66 and Asn-121–Asp-124 each bind GTP. Cysteine methyl ester is present on Cys-189. Cys-189 is lipidated: S-geranylgeranyl cysteine. The propeptide at Ile-190–Leu-192 is removed in mature form.

This sequence belongs to the small GTPase superfamily. Ras family.

It localises to the cell membrane. The catalysed reaction is GTP + H2O = GDP + phosphate + H(+). Its activity is regulated as follows. Alternates between an inactive form bound to GDP and an active form bound to GTP. Activated by a guanine nucleotide-exchange factor (GEF) and inactivated by a GTPase-activating protein (GAP). Ras proteins bind GDP/GTP and possess intrinsic GTPase activity. In Hydra vulgaris (Hydra), this protein is Ras-like protein RAS2 (RAS2).